A 391-amino-acid chain; its full sequence is Ferrochelatase (391 aa).

2 residues coordinate Fe cation: H196 and E281.

The protein belongs to the ferrochelatase family.

It localises to the cytoplasm. It carries out the reaction heme b + 2 H(+) = protoporphyrin IX + Fe(2+). Its pathway is porphyrin-containing compound metabolism; protoheme biosynthesis; protoheme from protoporphyrin-IX: step 1/1. In terms of biological role, catalyzes the ferrous insertion into protoporphyrin IX. The protein is Ferrochelatase of Prochlorococcus marinus (strain NATL1A).